The primary structure comprises 844 residues: RING finger containing E3 ubiquitin-protein ligase WSV222 (844 aa).

229 to 236 contributes to the ATP binding site; the sequence is AEDDKGKT. The RING-type; atypical zinc finger occupies 308 to 359; that stretch reads CGVCATSVEEDENEGKTTSLSWYQMNCKHYIHCECLMGMCAAAGNVQCPMCR.

As to quaternary structure, interacts with host UBE2E1/UBCH6; this interaction results in WSV222 auto-ubiquitination. Interacts with host tumor suppressor-like protein.

It carries out the reaction S-ubiquitinyl-[E2 ubiquitin-conjugating enzyme]-L-cysteine + [acceptor protein]-L-lysine = [E2 ubiquitin-conjugating enzyme]-L-cysteine + N(6)-ubiquitinyl-[acceptor protein]-L-lysine.. Its pathway is protein modification; protein ubiquitination. In terms of biological role, probable E3 ubiquitin-protein ligase which accepts ubiquitin from the E2 ubiquitin-conjugating enzyme UBE2E1/UBCH6 in the form of a thioester and then directly transfers the ubiquitin to targeted substrates. Mediates ubiquitination of host tumor-suppressor-like protein (TSL) targeting it for degradation. Might function as an anti-apoptosis protein by counteracting TSL-induced apoptosis. The polypeptide is RING finger containing E3 ubiquitin-protein ligase WSV222 (White spot syndrome virus (isolate Shrimp/China/Tongan/1996) (WSSV)).